The sequence spans 194 residues: RNA polymerase II subunit A C-terminal domain phosphatase SSU72 like protein 6 (194 aa).

Belongs to the SSU72 phosphatase family.

The protein resides in the nucleus. The catalysed reaction is O-phospho-L-seryl-[protein] + H2O = L-seryl-[protein] + phosphate. It catalyses the reaction O-phospho-L-threonyl-[protein] + H2O = L-threonyl-[protein] + phosphate. Protein phosphatase that catalyzes the dephosphorylation of the C-terminal domain of RNA polymerase II. Plays a role in RNA processing and termination. This is RNA polymerase II subunit A C-terminal domain phosphatase SSU72 like protein 6 from Homo sapiens (Human).